The primary structure comprises 534 residues: Probable alkaline/neutral invertase D (534 aa).

Phosphoserine occurs at positions 7 and 37. Position 55 is a phosphothreonine (Thr55). Ser532 carries the phosphoserine modification.

Belongs to the glycosyl hydrolase 100 family.

The catalysed reaction is Hydrolysis of terminal non-reducing beta-D-fructofuranoside residues in beta-D-fructofuranosides.. Functionally, invertase that cleaves sucrose into glucose and fructose. This chain is Probable alkaline/neutral invertase D, found in Arabidopsis thaliana (Mouse-ear cress).